Reading from the N-terminus, the 816-residue chain is Molybdenum cofactor sulfurase (816 aa).

Lysine 273 carries the post-translational modification N6-(pyridoxal phosphate)lysine. The active site involves cysteine 427. One can recognise an MOSC domain in the interval 647–812 (NSDSQSHSCI…IRVGEEIIPN (166 aa)).

The protein belongs to the class-V pyridoxal-phosphate-dependent aminotransferase family. MOCOS subfamily. Pyridoxal 5'-phosphate is required as a cofactor. As to expression, ubiquitously expressed.

It carries out the reaction Mo-molybdopterin + L-cysteine + AH2 = thio-Mo-molybdopterin + L-alanine + A + H2O. The protein operates within cofactor biosynthesis; molybdopterin biosynthesis. Functionally, sulfurates the molybdenum cofactor. Sulfation of molybdenum is essential for xanthine dehydrogenase (XDH) and aldehyde oxidase (ADO) enzymes in which molybdenum cofactor is liganded by 1 oxygen and 1 sulfur atom in active form. In Solanum lycopersicum (Tomato), this protein is Molybdenum cofactor sulfurase (FLACCA).